The sequence spans 365 residues: Succinyl-diaminopimelate desuccinylase (365 aa).

His-65 is a binding site for Zn(2+). Asp-67 is an active-site residue. Zn(2+) is bound at residue Asp-96. The active-site Proton acceptor is the Glu-126. The Zn(2+) site is built by Glu-127, Glu-155, and His-340.

This sequence belongs to the peptidase M20A family. DapE subfamily. Homodimer. It depends on Zn(2+) as a cofactor. Co(2+) serves as cofactor.

The catalysed reaction is N-succinyl-(2S,6S)-2,6-diaminopimelate + H2O = (2S,6S)-2,6-diaminopimelate + succinate. The protein operates within amino-acid biosynthesis; L-lysine biosynthesis via DAP pathway; LL-2,6-diaminopimelate from (S)-tetrahydrodipicolinate (succinylase route): step 3/3. In terms of biological role, catalyzes the hydrolysis of N-succinyl-L,L-diaminopimelic acid (SDAP), forming succinate and LL-2,6-diaminopimelate (DAP), an intermediate involved in the bacterial biosynthesis of lysine and meso-diaminopimelic acid, an essential component of bacterial cell walls. This chain is Succinyl-diaminopimelate desuccinylase, found in Campylobacter jejuni subsp. jejuni serotype O:6 (strain 81116 / NCTC 11828).